Here is a 155-residue protein sequence, read N- to C-terminus: Transcriptional repressor NrdR (155 aa).

The span at 1–10 (MQCPHCHHNS) shows a compositional bias: basic residues. The disordered stretch occupies residues 1-21 (MQCPHCHHNSSRVVDSRPTDG). The segment at 3 to 34 (CPHCHHNSSRVVDSRPTDGGRAIRRRRECENC) is a zinc-finger region. An ATP-cone domain is found at 49–139 (LLVIKKNGTR…VYRQFKDMSV (91 aa)).

This sequence belongs to the NrdR family. Requires Zn(2+) as cofactor.

Functionally, negatively regulates transcription of bacterial ribonucleotide reductase nrd genes and operons by binding to NrdR-boxes. The chain is Transcriptional repressor NrdR from Lacticaseibacillus casei (strain BL23) (Lactobacillus casei).